The sequence spans 171 residues: 3-hydroxydecanoyl-[acyl-carrier-protein] dehydratase (171 aa).

Residue His70 is part of the active site.

It belongs to the thioester dehydratase family. FabA subfamily. In terms of assembly, homodimer.

The protein resides in the cytoplasm. It carries out the reaction a (3R)-hydroxyacyl-[ACP] = a (2E)-enoyl-[ACP] + H2O. The enzyme catalyses (3R)-hydroxydecanoyl-[ACP] = (2E)-decenoyl-[ACP] + H2O. It catalyses the reaction (2E)-decenoyl-[ACP] = (3Z)-decenoyl-[ACP]. Its pathway is lipid metabolism; fatty acid biosynthesis. Necessary for the introduction of cis unsaturation into fatty acids. Catalyzes the dehydration of (3R)-3-hydroxydecanoyl-ACP to E-(2)-decenoyl-ACP and then its isomerization to Z-(3)-decenoyl-ACP. Can catalyze the dehydratase reaction for beta-hydroxyacyl-ACPs with saturated chain lengths up to 16:0, being most active on intermediate chain length. This is 3-hydroxydecanoyl-[acyl-carrier-protein] dehydratase from Mesorhizobium japonicum (strain LMG 29417 / CECT 9101 / MAFF 303099) (Mesorhizobium loti (strain MAFF 303099)).